A 512-amino-acid polypeptide reads, in one-letter code: Gasdermin-E (512 aa).

Residues 1–56 (MFAKATRNFLKEVDAGGDLISVSHLNDSDKLQLLSLVTKKKRYWCWQRPKYQILSA) form a membrane targeting domain region. Cys-45 is modified (S-(2-succinyl)cysteine). Lys-120 participates in a covalent cross-link: Glycyl lysine isopeptide (Lys-Gly) (interchain with G-Cter in ubiquitin). S-(2-succinyl)cysteine is present on residues Cys-156, Cys-168, and Cys-180. A Glycyl lysine isopeptide (Lys-Gly) (interchain with G-Cter in ubiquitin) cross-link involves residue Lys-189. Cys-235, Cys-411, and Cys-420 each carry S-(2-succinyl)cysteine.

The protein belongs to the gasdermin family. As to quaternary structure, homooligomer; homooligomeric ring-shaped pore complex containing 27-28 subunits when inserted in the membrane. In terms of processing, cleavage at Asp-270 by CASP3 (mature and uncleaved precursor forms) or granzyme B (GZMB) relieves autoinhibition and is sufficient to initiate pyroptosis. Succination by the Krebs cycle intermediate fumarate, which leads to S-(2-succinyl)cysteine residues, inhibits processing by caspases, and ability to initiate pyroptosis. Succination modification is catalyzed by a non-enzymatic reaction caused by an accumulation of fumarate. Post-translationally, ubiquitinated on Lys-120 and Lys-189 via 'Lys-48'-linked polyubiquitin chains, leading to proteasomal degradation. Deubiquitinated by USP48, leading to increased stability. In terms of processing, palmitoylated. Expressed in spleen, kidney, large and small intestine, testicle, stomach and by CD4(+)CD(8+) T cells in thymus. Expressed by macrophages.

It localises to the cell membrane. The protein localises to the cytoplasm. Its subcellular location is the cytosol. The full-length protein before cleavage is inactive: intramolecular interactions between N- and C-terminal domains mediate autoinhibition in the absence of activation signal. The intrinsic pyroptosis-inducing activity is carried by the released N-terminal moiety (Gasdermin-E, N-terminal) following cleavage by CASP3 or granzyme B (GZMB). Activated by NLRP1 in the absence of GSDMD expression: NLRP1 cleaves and activates CASP8, promoting downstream activation of CASP3 and subsequent activation of GSDME. Its function is as follows. Precursor of a pore-forming protein that converts non-inflammatory apoptosis to pyroptosis. This form constitutes the precursor of the pore-forming protein: upon cleavage, the released N-terminal moiety (Gasdermin-E, N-terminal) binds to membranes and forms pores, triggering pyroptosis. In terms of biological role, pore-forming protein produced by cleavage by CASP3 or granzyme B (GZMB), which converts non-inflammatory apoptosis to pyroptosis or promotes granzyme-mediated pyroptosis, respectively. After cleavage, moves to the plasma membrane, homooligomerizes within the membrane and forms pores of 10-15 nanometers (nm) of inner diameter, allowing the release of mature interleukins (IL1B and IL16) and triggering pyroptosis. Binds to inner leaflet lipids, bisphosphorylated phosphatidylinositols, such as phosphatidylinositol (4,5)-bisphosphate. Cleavage by CASP3 switches CASP3-mediated apoptosis induced by TNF or danger signals, such as chemotherapy drugs, to pyroptosis. Mediates secondary necrosis downstream of the mitochondrial apoptotic pathway and CASP3 activation as well as in response to viral agents. Exhibits bactericidal activity. Cleavage by GZMB promotes tumor suppressor activity by triggering robust anti-tumor immunity. Suppresses tumors by mediating granzyme-mediated pyroptosis in target cells of natural killer (NK) cells: cleavage by granzyme B (GZMB), delivered to target cells from NK-cells, triggers pyroptosis of tumor cells and tumor suppression. May play a role in the p53/TP53-regulated cellular response to DNA damage. This Mus musculus (Mouse) protein is Gasdermin-E.